The sequence spans 361 residues: tRNA 2-selenouridine synthase (361 aa).

Positions 11–134 (ALLERPLIDV…MRQCVNAEIE (124 aa)) constitute a Rhodanese domain. The S-selanylcysteine intermediate role is filled by cysteine 94.

It belongs to the SelU family. Monomer.

It carries out the reaction 5-methylaminomethyl-2-thiouridine(34) in tRNA + selenophosphate + (2E)-geranyl diphosphate + H2O + H(+) = 5-methylaminomethyl-2-selenouridine(34) in tRNA + (2E)-thiogeraniol + phosphate + diphosphate. The enzyme catalyses 5-methylaminomethyl-2-thiouridine(34) in tRNA + (2E)-geranyl diphosphate = 5-methylaminomethyl-S-(2E)-geranyl-thiouridine(34) in tRNA + diphosphate. It catalyses the reaction 5-methylaminomethyl-S-(2E)-geranyl-thiouridine(34) in tRNA + selenophosphate + H(+) = 5-methylaminomethyl-2-(Se-phospho)selenouridine(34) in tRNA + (2E)-thiogeraniol. The catalysed reaction is 5-methylaminomethyl-2-(Se-phospho)selenouridine(34) in tRNA + H2O = 5-methylaminomethyl-2-selenouridine(34) in tRNA + phosphate. Involved in the post-transcriptional modification of the uridine at the wobble position (U34) of tRNA(Lys), tRNA(Glu) and tRNA(Gln). Catalyzes the conversion of 2-thiouridine (S2U-RNA) to 2-selenouridine (Se2U-RNA). Acts in a two-step process involving geranylation of 2-thiouridine (S2U) to S-geranyl-2-thiouridine (geS2U) and subsequent selenation of the latter derivative to 2-selenouridine (Se2U) in the tRNA chain. This Chromohalobacter salexigens (strain ATCC BAA-138 / DSM 3043 / CIP 106854 / NCIMB 13768 / 1H11) protein is tRNA 2-selenouridine synthase.